We begin with the raw amino-acid sequence, 374 residues long: Chaperone protein DnaJ (374 aa).

One can recognise a J domain in the interval 5–70; sequence DFYEILGLGK…QKRDAYDRYG (66 aa). Positions 28–47 are disordered; sequence LAMKHHPDRNPDSKGAEDKF. Basic and acidic residues predominate over residues 35 to 47; the sequence is DRNPDSKGAEDKF. The CR-type zinc finger occupies 134 to 212; that stretch reads GYDTTIRVPS…CSGAGKIKRN (79 aa). Residues C147, C150, C164, C167, C186, C189, C200, and C203 each contribute to the Zn(2+) site. CXXCXGXG motif repeat units follow at residues 147-154, 164-171, 186-193, and 200-207; these read CETCDGSG, CTTCGGHG, CPKCHGSG, and CTACSGAG.

This sequence belongs to the DnaJ family. In terms of assembly, homodimer. Zn(2+) is required as a cofactor.

The protein localises to the cytoplasm. Functionally, participates actively in the response to hyperosmotic and heat shock by preventing the aggregation of stress-denatured proteins and by disaggregating proteins, also in an autonomous, DnaK-independent fashion. Unfolded proteins bind initially to DnaJ; upon interaction with the DnaJ-bound protein, DnaK hydrolyzes its bound ATP, resulting in the formation of a stable complex. GrpE releases ADP from DnaK; ATP binding to DnaK triggers the release of the substrate protein, thus completing the reaction cycle. Several rounds of ATP-dependent interactions between DnaJ, DnaK and GrpE are required for fully efficient folding. Also involved, together with DnaK and GrpE, in the DNA replication of plasmids through activation of initiation proteins. This is Chaperone protein DnaJ from Herminiimonas arsenicoxydans.